We begin with the raw amino-acid sequence, 561 residues long: Arginine--tRNA ligase (561 aa).

The short motif at 129–139 is the 'HIGH' region element; that stretch reads ANPTGPLHVGH.

This sequence belongs to the class-I aminoacyl-tRNA synthetase family. Monomer.

The protein localises to the cytoplasm. It catalyses the reaction tRNA(Arg) + L-arginine + ATP = L-arginyl-tRNA(Arg) + AMP + diphosphate. The sequence is that of Arginine--tRNA ligase from Bordetella bronchiseptica (strain ATCC BAA-588 / NCTC 13252 / RB50) (Alcaligenes bronchisepticus).